The sequence spans 129 residues: Glycine cleavage system H protein (129 aa).

Residues 22 to 103 (TGTVGITDYA…AHTAWIMKIE (82 aa)) form the Lipoyl-binding domain. The residue at position 63 (Lys-63) is an N6-lipoyllysine.

This sequence belongs to the GcvH family. The glycine cleavage system is composed of four proteins: P, T, L and H. Requires (R)-lipoate as cofactor.

Its function is as follows. The glycine cleavage system catalyzes the degradation of glycine. The H protein shuttles the methylamine group of glycine from the P protein to the T protein. This Acidobacterium capsulatum (strain ATCC 51196 / DSM 11244 / BCRC 80197 / JCM 7670 / NBRC 15755 / NCIMB 13165 / 161) protein is Glycine cleavage system H protein.